Here is a 127-residue protein sequence, read N- to C-terminus: uncharacterized protein (127 aa).

The signal sequence occupies residues 1 to 16 (MIKKIIFGIAILLSLS). A lipid anchor (N-palmitoyl cysteine) is attached at C17. The S-diacylglycerol cysteine moiety is linked to residue C17. Residues 56 to 101 (EVRKEIQEYRVEIVDINKKKRELYNSLSKEAQNFLAEQQKYKQKLS) adopt a coiled-coil conformation. The segment at 101-127 (SISKLPTEDDSPNNTANSKDNKDTDTK) is disordered.

The protein resides in the cell membrane. This is an uncharacterized protein from Rickettsia felis (strain ATCC VR-1525 / URRWXCal2) (Rickettsia azadi).